A 241-amino-acid chain; its full sequence is Proteasome subunit alpha (241 aa).

The protein belongs to the peptidase T1A family. The 20S proteasome core is composed of 14 alpha and 14 beta subunits that assemble into four stacked heptameric rings, resulting in a barrel-shaped structure. The two inner rings, each composed of seven catalytic beta subunits, are sandwiched by two outer rings, each composed of seven alpha subunits. The catalytic chamber with the active sites is on the inside of the barrel. Has a gated structure, the ends of the cylinder being occluded by the N-termini of the alpha-subunits. Is capped by the proteasome-associated ATPase, ARC.

Its subcellular location is the cytoplasm. Its pathway is protein degradation; proteasomal Pup-dependent pathway. Its activity is regulated as follows. The formation of the proteasomal ATPase ARC-20S proteasome complex, likely via the docking of the C-termini of ARC into the intersubunit pockets in the alpha-rings, may trigger opening of the gate for substrate entry. Interconversion between the open-gate and close-gate conformations leads to a dynamic regulation of the 20S proteasome proteolysis activity. Its function is as follows. Component of the proteasome core, a large protease complex with broad specificity involved in protein degradation. In Frankia alni (strain DSM 45986 / CECT 9034 / ACN14a), this protein is Proteasome subunit alpha.